Here is a 274-residue protein sequence, read N- to C-terminus: Cytochrome b-c1 complex subunit Rieske, mitochondrial (274 aa).

The Mitochondrial matrix segment spans residues 79–103 (SHTDVKVPDFYDYRRLEVLDSTKSS). A helical membrane pass occupies residues 104–140 (RESSEARKGFSYLVTAVTTVGVAYAAKNVVTQFISSM). Residues 141–274 (SASADVLAMA…FTGDDVVVVG (134 aa)) lie on the Mitochondrial intermembrane side of the membrane. A Rieske domain is found at 187 to 272 (EAAVELSQLR…YEFTGDDVVV (86 aa)). The [2Fe-2S] cluster site is built by C217, H219, C236, H239, and S241. A disulfide bridge links C222 with C238.

Belongs to the Rieske iron-sulfur protein family. In terms of assembly, component of the ubiquinol-cytochrome c oxidoreductase (cytochrome b-c1 complex, complex III, CIII), a multisubunit enzyme composed of 11 subunits. The complex is composed of 3 respiratory subunits cytochrome b, cytochrome c1 and Rieske protein UQCRFS1, 2 core protein subunits UQCRC1/QCR1 and UQCRC2/QCR2, and 6 low-molecular weight protein subunits UQCRH/QCR6, UQCRB/QCR7, UQCRQ/QCR8, UQCR10/QCR9, UQCR11/QCR10 and subunit 9, the cleavage product of Rieske protein UQCRFS1. The complex exists as an obligatory dimer and forms supercomplexes (SCs) in the inner mitochondrial membrane with NADH-ubiquinone oxidoreductase (complex I, CI) and cytochrome c oxidase (complex IV, CIV), resulting in different assemblies (supercomplex SCI(1)III(2)IV(1) and megacomplex MCI(2)III(2)IV(2)). Incorporation of the Rieske protein UQCRFS1 is the penultimate step in complex III assembly. Interacts with TTC19, which is involved in the clearance of UQCRFS1 fragments. Component of the ubiquinol-cytochrome c oxidoreductase (cytochrome b-c1 complex, complex III, CIII). Subunit 9 corresponds to the mitochondrial targeting sequence (MTS) of Rieske protein UQCRFS1. It is retained after processing and incorporated inside complex III, where it remains bound to the complex and localizes between the 2 core subunits UQCRC1/QCR1 and UQCRC2/QCR2. The cofactor is [2Fe-2S] cluster. In terms of processing, proteolytic processing is necessary for the correct insertion of UQCRFS1 in the complex III dimer. Several fragments are generated during UQCRFS1 insertion, most probably due to the endogenous matrix-processing peptidase (MPP) activity of the 2 core protein subunits UQCRC1/QCR1 and UQCRC2/QCR2, which are homologous to the 2 mitochondrial-processing peptidase (MPP) subunits beta-MPP and alpha-MPP respectively. The action of the protease is also necessary for the clearance of the UQCRFS1 fragments.

The protein localises to the mitochondrion inner membrane. It catalyses the reaction a quinol + 2 Fe(III)-[cytochrome c](out) = a quinone + 2 Fe(II)-[cytochrome c](out) + 2 H(+)(out). Component of the ubiquinol-cytochrome c oxidoreductase, a multisubunit transmembrane complex that is part of the mitochondrial electron transport chain which drives oxidative phosphorylation. The respiratory chain contains 3 multisubunit complexes succinate dehydrogenase (complex II, CII), ubiquinol-cytochrome c oxidoreductase (cytochrome b-c1 complex, complex III, CIII) and cytochrome c oxidase (complex IV, CIV), that cooperate to transfer electrons derived from NADH and succinate to molecular oxygen, creating an electrochemical gradient over the inner membrane that drives transmembrane transport and the ATP synthase. The cytochrome b-c1 complex catalyzes electron transfer from ubiquinol to cytochrome c, linking this redox reaction to translocation of protons across the mitochondrial inner membrane, with protons being carried across the membrane as hydrogens on the quinol. In the process called Q cycle, 2 protons are consumed from the matrix, 4 protons are released into the intermembrane space and 2 electrons are passed to cytochrome c. The Rieske protein is a catalytic core subunit containing a [2Fe-2S] iron-sulfur cluster. It cycles between 2 conformational states during catalysis to transfer electrons from the quinol bound in the Q(0) site in cytochrome b to cytochrome c1. Incorporation of UQCRFS1 is the penultimate step in complex III assembly. Functionally, component of the ubiquinol-cytochrome c oxidoreductase (cytochrome b-c1 complex, complex III, CIII). UQCRFS1 undergoes proteolytic processing once it is incorporated in the complex III dimer. One of the fragments, called subunit 9, corresponds to its mitochondrial targeting sequence (MTS). The proteolytic processing is necessary for the correct insertion of UQCRFS1 in the complex III dimer, but the persistence of UQCRFS1-derived fragments may prevent newly imported UQCRFS1 to be processed and assembled into complex III and is detrimental for the complex III structure and function. The polypeptide is Cytochrome b-c1 complex subunit Rieske, mitochondrial (UQCRFS1) (Chlorocebus aethiops (Green monkey)).